Here is a 1103-residue protein sequence, read N- to C-terminus: MNHQQQQQQQQKAGEQQLSEPEDMEMEAGDTDDPPRITQNPVINGNVALSDGHSNAEEDMEDDTSWRSEATFQFTVERFSRLSESVLSPPCFVRNLPWKIMVMPRFYPDRPHQKSVGFFLQCNAESDSTSWSCHAQAVLKIINYRDDDKSFSRRISHLFFHKENDWGFSNFMAWSEVTDPEKGFIDDDKVTFEVFVQADAPHGVAWDSKKHTGYVGLKNQGATCYMNSLLQTLFFTNQLRKAVYMMPTEGDDSSKSVPLALQRVFYELQHSDKPVGTKKLTKSFGWETLDSFMQHDVQELCRVLLDNVENKMKGTCVEGTIPKLFRGKMVSYIQCKEVDYRSDRREDYYDIQLSIKGKKNIFESFVDYVAVEQLDGDNKYDAGEHGLQEAEKGVKFLTLPPVLHLQLMRFMYDPQTDQNIKINDRFEFPEQLPLDEFLQKTDPKDPANYILHAVLVHSGDNHGGHYVVYLNPKGDGKWCKFDDDVVSRCTKEEAIEHNYGGHDDDLSVRHCTNAYMLVYIRESKLSEVLQAVTDHDIPQQLVERLQEEKRIEAQKRKERQEAHLYMQVQIVAEDQFCGHQGNDMYDEEKVRYTVFKVLKNSSLAEFVQSLSQTMGFPQDQIRLWPMQARSNGTKRPAMLDNEADGSKTMIELSDNENPWTIFLETVDPELAASGATLPKFDKDHDVMLFLKMYDPKTRSLNYCGHIYTPISCKIRDLLPVMCDRAGFIQDTSLILYEEVKPNLTERIQDYDVSLDKALDELMDGDIIVFQKDDPENDNSELPTAKEYFRDLYHRVDVIFCDKTIPNDPGFVVTLSNRMNYFQVAKTVAQRLNTDPMLLQFFKSQGYRDGPGNPLRHNYEGTLRDLLQFFKPRQPKKLYYQQLKMKITDFENRRSFKCIWLNSQFREEEITLYPDKHGCVRDLLEECKKAVELGDEASGRLRLLEIVSYKIIGVHQEDELLECLSPATSRTFRIEEIPLDQVNIDKENEMLITVAHFHKEVFGTFGIPFLLRIHQGEHFREVMKRIQSLLDIQEKEFEKFKFAIVMMGRHQYINEDEYEVNLKDFEPQPGNMSHPRPWLGLDHFNKAPKRSRYTYLEKAIKIHN.

Positions 1-11 are enriched in low complexity; it reads MNHQQQQQQQQ. The disordered stretch occupies residues 1–40; that stretch reads MNHQQQQQQQQKAGEQQLSEPEDMEMEAGDTDDPPRITQN. Residues 1-209 are interaction with TSPYL5; it reads MNHQQQQQQQ…APHGVAWDSK (209 aa). A Phosphoserine modification is found at S19. The segment covering 20 to 32 has biased composition (acidic residues); it reads EPEDMEMEAGDTD. S50 and S54 each carry phosphoserine. The interval 54–209 is interaction with p53/TP53 and MDM2; that stretch reads SNAEEDMEDD…APHGVAWDSK (156 aa). Residues 69–196 enclose the MATH domain; that stretch reads EATFQFTVER…DDKVTFEVFV (128 aa). A necessary for nuclear localization region spans residues 71–206; that stretch reads TFQFTVERFS…QADAPHGVAW (136 aa). Residues 215-522 form the USP domain; the sequence is VGLKNQGATC…NAYMLVYIRE (308 aa). C224 acts as the Nucleophile in catalysis. The Proton acceptor role is filled by H465. K870 is modified (N6-acetyllysine; alternate). K870 participates in a covalent cross-link: Glycyl lysine isopeptide (Lys-Gly) (interchain with G-Cter in SUMO2); alternate. K870 participates in a covalent cross-link: Glycyl lysine isopeptide (Lys-Gly) (interchain with G-Cter in ubiquitin); alternate. K883 is covalently cross-linked (Glycyl lysine isopeptide (Lys-Gly) (interchain with G-Cter in SUMO2)). S964 carries the post-translational modification Phosphoserine. Residues K1085 and K1097 each carry the N6-acetyllysine modification.

Belongs to the peptidase C19 family. In terms of assembly, monomer. Homodimer. Part of a complex with DAXX, MDM2, RASSF1 and USP7. Part of a complex with DAXX, MDM2 and USP7. Interacts with MDM2; the interaction is independent of p53/TP53. Interacts with DAXX; the interaction is direct and independent of MDM2 and p53/TP53. Component of a complex composed of KMT2E, OGT and USP7; the complex stabilizes KMT2E, preventing KMT2E ubiquitination and proteasomal-mediated degradation. Interacts (via MATH domain) with KMT2E. Interacts with OGT. Interacts with FOXO4; the interaction is enhanced in presence of hydrogen peroxide and occurs independently of p53/TP53. Interacts with p53/TP53; the interaction is enhanced in response to DNA damage; the interaction is impaired by TSPYL5. Interacts with PTEN; the interaction is direct. Interacts with ATXN1 and the strength of interaction is influenced by the length of the poly-Gln region in ATXN1. A weaker interaction seen with mutants having longer poly-Gln regions. Interacts with KIAA1530/UVSSA. Interacts with MEX3C and antagonizes its ability to degrade mRNA. Interacts with DNMT1 and UHRF1. Interacts with FOXP3. Interacts (via MATH domain) with RNF220. Associated component of the Polycomb group (PcG) multiprotein PRC1-like complex. Interacts with EPOP. Interacts with OTUD4 and USP9X; the interaction is direct. Interacts with CRY2. Interacts with REST. Interacts with ERCC6. Part of a complex consisting of USP7, MAGEL2 and TRIM27; directly interacts with MAGEL2; directly interacts with TRIM27. Polyneddylated. In terms of processing, not sumoylated. Post-translationally, ubiquitinated at Lys-870. Polyubiquitinated. Strongly expressed in the testis, spleen and brain. Weakly expressed in the stomach, small intestine, skeletal muscle and uterus.

Its subcellular location is the nucleus. It is found in the cytoplasm. The protein localises to the PML body. It localises to the chromosome. The enzyme catalyses Thiol-dependent hydrolysis of ester, thioester, amide, peptide and isopeptide bonds formed by the C-terminal Gly of ubiquitin (a 76-residue protein attached to proteins as an intracellular targeting signal).. In terms of biological role, hydrolase that deubiquitinates target proteins such as ARMC5, FOXO4, DEPTOR, KAT5, p53/TP53, MDM2, ERCC6, DNMT1, UHRF1, PTEN, KMT2E/MLL5 and DAXX. Together with DAXX, prevents MDM2 self-ubiquitination and enhances the E3 ligase activity of MDM2 towards p53/TP53, thereby promoting p53/TP53 ubiquitination and proteasomal degradation. Deubiquitinates p53/TP53, preventing degradation of p53/TP53, and enhances p53/TP53-dependent transcription regulation, cell growth repression and apoptosis. Deubiquitinates p53/TP53 and MDM2 and strongly stabilizes p53/TP53 even in the presence of excess MDM2, and also induces p53/TP53-dependent cell growth repression and apoptosis. Deubiquitination of FOXO4 in presence of hydrogen peroxide is not dependent on p53/TP53 and inhibits FOXO4-induced transcriptional activity. In association with DAXX, is involved in the deubiquitination and translocation of PTEN from the nucleus to the cytoplasm, both processes that are counteracted by PML. Deubiquitinates KMT2E preventing KMT2E proteasomal-mediated degradation. Involved in cell proliferation during early embryonic development. Involved in transcription-coupled nucleotide excision repair (TC-NER) in response to UV damage: recruited to DNA damage sites following interaction with KIAA1530/UVSSA and promotes deubiquitination of ERCC6, preventing UV-induced degradation of ERCC6. Involved in maintenance of DNA methylation via its interaction with UHRF1 and DNMT1: acts by mediating deubiquitination of UHRF1 and DNMT1, preventing their degradation and promoting DNA methylation by DNMT1. Deubiquitinates alkylation repair enzyme ALKBH3. OTUD4 recruits USP7 and USP9X to stabilize ALKBH3, thereby promoting the repair of alkylated DNA lesions. Acts as a chromatin regulator via its association with the Polycomb group (PcG) multiprotein PRC1-like complex; may act by deubiquitinating components of the PRC1-like complex. Able to mediate deubiquitination of histone H2B; it is however unsure whether this activity takes place in vivo. Exhibits a preference towards 'Lys-48'-linked ubiquitin chains. Increases regulatory T-cells (Treg) suppressive capacity by deubiquitinating and stabilizing transcription factor FOXP3 which is crucial for Treg cell function. Plays a role in the maintenance of the circadian clock periodicity via deubiquitination and stabilization of the CRY1 and CRY2 proteins. Deubiquitinates REST, thereby stabilizing REST and promoting the maintenance of neural progenitor cells. Deubiquitinates SIRT7, inhibiting SIRT7 histone deacetylase activity and regulating gluconeogenesis. Involved in the regulation of WASH-dependent actin polymerization at the surface of endosomes and the regulation of endosomal protein recycling. It maintains optimal WASH complex activity and precise F-actin levels via deubiquitination of TRIM27 and WASHC1. Mediates the deubiquitination of phosphorylated DEPTOR, promoting its stability and leading to decreased mTORC1 signaling. This chain is Ubiquitin carboxyl-terminal hydrolase 7 (Usp7), found in Rattus norvegicus (Rat).